The primary structure comprises 337 residues: 4-hydroxythreonine-4-phosphate dehydrogenase (337 aa).

His-138 and Thr-139 together coordinate substrate. A divalent metal cation is bound by residues His-168, His-212, and His-267. Residues Lys-275, Asn-284, and Arg-293 each coordinate substrate.

Belongs to the PdxA family. As to quaternary structure, homodimer. The cofactor is Zn(2+). Mg(2+) is required as a cofactor. Requires Co(2+) as cofactor.

It is found in the cytoplasm. It carries out the reaction 4-(phosphooxy)-L-threonine + NAD(+) = 3-amino-2-oxopropyl phosphate + CO2 + NADH. Its pathway is cofactor biosynthesis; pyridoxine 5'-phosphate biosynthesis; pyridoxine 5'-phosphate from D-erythrose 4-phosphate: step 4/5. Functionally, catalyzes the NAD(P)-dependent oxidation of 4-(phosphooxy)-L-threonine (HTP) into 2-amino-3-oxo-4-(phosphooxy)butyric acid which spontaneously decarboxylates to form 3-amino-2-oxopropyl phosphate (AHAP). The protein is 4-hydroxythreonine-4-phosphate dehydrogenase of Beijerinckia indica subsp. indica (strain ATCC 9039 / DSM 1715 / NCIMB 8712).